Consider the following 130-residue polypeptide: Small ribosomal subunit protein uS8A (130 aa).

The protein belongs to the universal ribosomal protein uS8 family.

This is Small ribosomal subunit protein uS8A (RpS15Aa) from Drosophila melanogaster (Fruit fly).